We begin with the raw amino-acid sequence, 521 residues long: Probable xyloglucan galactosyltransferase GT14 (521 aa).

The Cytoplasmic portion of the chain corresponds to 1–30; that stretch reads MRPKNYSQMEKPISITTGKFRTNNNNNHNN. The chain crosses the membrane as a helical; Signal-anchor for type II membrane protein span at residues 31 to 51; sequence VWFVVPLFFILCFVLLCFDYS. Residues 52-521 are Lumenal-facing; the sequence is ALFTDTDETA…SPYEEPQVLA (470 aa). The segment at 72–92 is disordered; it reads TSSEFTKDDNFSRFPDDPSPD. Basic and acidic residues predominate over residues 76-87; sequence FTKDDNFSRFPD. Residues N81, N177, N203, N249, N265, and N411 are each glycosylated (N-linked (GlcNAc...) asparagine). The tract at residues 492-521 is disordered; sequence RQGKDGSDGFDDRDDYKYTFSPYEEPQVLA.

The protein belongs to the glycosyltransferase 47 family. Expressed in roots, hypocotyls, cotyledons, leaves, stems, stamens and carpels.

The protein resides in the golgi apparatus membrane. Its function is as follows. Functions in xyloglucan synthesis by adding side chains to the xylosylated glucan backbone. Involved in the galactosylation of hemicellulose xyloglucan. The protein is Probable xyloglucan galactosyltransferase GT14 of Arabidopsis thaliana (Mouse-ear cress).